The chain runs to 487 residues: Betaine aldehyde dehydrogenase (487 aa).

Residues I27 and D93 each contribute to the K(+) site. Residue 149–151 (GAW) coordinates NAD(+). The active-site Charge relay system is the K161. Residues 175–178 (KPSE) and 228–231 (SVPT) each bind NAD(+). L243 serves as a coordination point for K(+). E249 (proton acceptor) is an active-site residue. Positions 251, 283, and 384 each coordinate NAD(+). C283 serves as the catalytic Nucleophile. C283 carries the post-translational modification Cysteine sulfenic acid (-SOH). Residues K454 and G457 each contribute to the K(+) site. Catalysis depends on E461, which acts as the Charge relay system.

This sequence belongs to the aldehyde dehydrogenase family. In terms of assembly, dimer of dimers. Requires K(+) as cofactor.

The catalysed reaction is betaine aldehyde + NAD(+) + H2O = glycine betaine + NADH + 2 H(+). It participates in amine and polyamine biosynthesis; betaine biosynthesis via choline pathway; betaine from betaine aldehyde: step 1/1. Its function is as follows. Involved in the biosynthesis of the osmoprotectant glycine betaine. Catalyzes the irreversible oxidation of betaine aldehyde to the corresponding acid. The polypeptide is Betaine aldehyde dehydrogenase (Brucella melitensis biotype 2 (strain ATCC 23457)).